Here is a 346-residue protein sequence, read N- to C-terminus: N-acetyl-gamma-glutamyl-phosphate reductase (346 aa).

Cys149 is an active-site residue.

Belongs to the NAGSA dehydrogenase family. Type 1 subfamily.

It localises to the cytoplasm. It catalyses the reaction N-acetyl-L-glutamate 5-semialdehyde + phosphate + NADP(+) = N-acetyl-L-glutamyl 5-phosphate + NADPH + H(+). It participates in amino-acid biosynthesis; L-arginine biosynthesis; N(2)-acetyl-L-ornithine from L-glutamate: step 3/4. Its function is as follows. Catalyzes the NADPH-dependent reduction of N-acetyl-5-glutamyl phosphate to yield N-acetyl-L-glutamate 5-semialdehyde. The sequence is that of N-acetyl-gamma-glutamyl-phosphate reductase from Pelobacter propionicus (strain DSM 2379 / NBRC 103807 / OttBd1).